A 248-amino-acid polypeptide reads, in one-letter code: Pyridoxine 5'-phosphate synthase (248 aa).

N12 serves as a coordination point for 3-amino-2-oxopropyl phosphate. 14 to 15 lines the 1-deoxy-D-xylulose 5-phosphate pocket; sequence DH. R23 lines the 3-amino-2-oxopropyl phosphate pocket. Catalysis depends on H48, which acts as the Proton acceptor. 1-deoxy-D-xylulose 5-phosphate is bound by residues R50 and H55. E75 functions as the Proton acceptor in the catalytic mechanism. T105 contacts 1-deoxy-D-xylulose 5-phosphate. The active-site Proton donor is H196. Residues G197 and 218–219 contribute to the 3-amino-2-oxopropyl phosphate site; that span reads GH.

The protein belongs to the PNP synthase family. Homooctamer; tetramer of dimers.

It localises to the cytoplasm. The enzyme catalyses 3-amino-2-oxopropyl phosphate + 1-deoxy-D-xylulose 5-phosphate = pyridoxine 5'-phosphate + phosphate + 2 H2O + H(+). Its pathway is cofactor biosynthesis; pyridoxine 5'-phosphate biosynthesis; pyridoxine 5'-phosphate from D-erythrose 4-phosphate: step 5/5. Functionally, catalyzes the complicated ring closure reaction between the two acyclic compounds 1-deoxy-D-xylulose-5-phosphate (DXP) and 3-amino-2-oxopropyl phosphate (1-amino-acetone-3-phosphate or AAP) to form pyridoxine 5'-phosphate (PNP) and inorganic phosphate. The chain is Pyridoxine 5'-phosphate synthase from Pseudomonas fluorescens (strain ATCC BAA-477 / NRRL B-23932 / Pf-5).